Consider the following 285-residue polypeptide: Hydroxyethylthiazole kinase (285 aa).

Met-43 is a substrate binding site. Lys-119 and Ser-172 together coordinate ATP. Gly-199 serves as a coordination point for substrate.

It belongs to the Thz kinase family. Mg(2+) is required as a cofactor.

The enzyme catalyses 5-(2-hydroxyethyl)-4-methylthiazole + ATP = 4-methyl-5-(2-phosphooxyethyl)-thiazole + ADP + H(+). Its pathway is cofactor biosynthesis; thiamine diphosphate biosynthesis; 4-methyl-5-(2-phosphoethyl)-thiazole from 5-(2-hydroxyethyl)-4-methylthiazole: step 1/1. Catalyzes the phosphorylation of the hydroxyl group of 4-methyl-5-beta-hydroxyethylthiazole (THZ). This chain is Hydroxyethylthiazole kinase, found in Desulfovibrio desulfuricans (strain ATCC 27774 / DSM 6949 / MB).